We begin with the raw amino-acid sequence, 219 residues long: Polysialic acid transport ATP-binding protein KpsT (219 aa).

In terms of domain architecture, ABC transporter spans 2–218; that stretch reads IKIENLTKSY…TEAIADYKKD (217 aa). Position 38–45 (38–45) interacts with ATP; it reads GQNGAGKS.

Belongs to the ABC transporter superfamily.

Its subcellular location is the cell inner membrane. Putative ATP-binding protein, and an energy coupling component for the transport of polysialic acid across the cytoplasmic membrane. The polypeptide is Polysialic acid transport ATP-binding protein KpsT (kpsT) (Escherichia coli).